The chain runs to 552 residues: MKGCLATMDKELWIERANDSLVKHFYEQQSDIEQREGFESKLTFGTAGIRGKFGLGEGRLNKFTIEKLALGLARYLNAQTNSPTIVIHYDIRHLSTEFAQIIANVLANHQITVYLPDTYKTTPELSFAVRNLNTTAGIMITASHNPKDYNGIKVYGSDGAQLSTDASELASRYIEEVGDPLQIDIPISKQNTSYIKPFPKSVTDDYMKHIQNMIGYIPKSDLQVVFTSLHGTSVPIVPELLKSLNFNQFNLVDAQCKPDPNFSSVQSANPEDHRAFDQAVELANKSHADLLISTDPDADRLGIAERDAHGHITYFNGNQIGALLLNYRIQQTSQLRHRLMIQSIVSSELTKSLARYNNVKYKEVLTGFKFIAQEIRQLDDHQNMIFAFEESYGFLSEPFVRDKDAVQIVPLIIKYASELKLYGKTLKDELEQIYQTVGRHEDTLFSHTLEGLEGKKKIESIMTHFRSNPPQEIQGLKVKAIEDYLTSEVYHLDKDTTSQINSSKSNVIRVLFDEGFIALRPSGTEPKIKLYVSLKCPDFDDVAQKINAMIFS.

Catalysis depends on Ser143, which acts as the Phosphoserine intermediate. Mg(2+)-binding residues include Ser143, Asp295, Asp297, and Asp299.

The protein belongs to the phosphohexose mutase family. Mg(2+) is required as a cofactor.

It carries out the reaction alpha-D-glucose 1-phosphate = alpha-D-glucose 6-phosphate. It participates in glycolipid metabolism; diglucosyl-diacylglycerol biosynthesis. Catalyzes the interconversion between glucose-6-phosphate and alpha-glucose-1-phosphate. This is the first step in the biosynthesis of diglucosyl-diacylglycerol (Glc2-DAG), i.e. the predominant glycolipid found in the S.aureus membrane, which is also used as a membrane anchor for lipoteichoic acid (LTA). This chain is Phosphoglucomutase (pgcA), found in Staphylococcus aureus (strain Mu50 / ATCC 700699).